An 84-amino-acid polypeptide reads, in one-letter code: Putative defensin-like protein 101 (84 aa).

A signal peptide spans 1–27; it reads MDITKNIVTLLLVVLFPILFYYNNVLA. Cystine bridges form between C39–C81, C43–C67, C52–C79, and C56–C80.

This sequence belongs to the DEFL family.

It localises to the secreted. In Arabidopsis thaliana (Mouse-ear cress), this protein is Putative defensin-like protein 101.